The chain runs to 938 residues: Protein O-mannosyl-transferase Tmtc2 (938 aa).

Met-1 is a topological domain (cytoplasmic). Residues 2–22 (PSLEPWLWGDSCSWLGMLAML) traverse the membrane as a helical segment. At 23 to 34 (RLRLHKSNMDFT) the chain is on the extracellular side. A helical transmembrane segment spans residues 35 to 55 (CLFCCSLAFVLYLNTLGAGFV). The Cytoplasmic portion of the chain corresponds to 56–108 (YDDRRAILANADVSGGTPWQRSFSNDFWGTPLTDSGSHGSWRPLCVLSFRLNY). The chain crosses the membrane as a helical span at residues 109-129 (LIGGGFAPWGFHLVNNLLHCV). The Extracellular portion of the chain corresponds to 130-139 (ATALVVRVAR). Residues 140–160 (TLLASVWAVLAAGALFAAHPI) form a helical membrane-spanning segment. Over 161 to 164 (HTEA) the chain is Cytoplasmic. The chain crosses the membrane as a helical span at residues 165 to 185 (VAGVVGRADLAACVCYLLTYL). Residues 186-208 (SYLRHMRWRESGDPRQWLALGAT) are Extracellular-facing. The helical transmembrane segment at 209-229 (LILAAAGLLCKETAITALLVC) threads the bilayer. Residues 230–249 (ALFDVMRGLSGQVDKQRLRS) are Cytoplasmic-facing. Residues 250–270 (VCIVLGALFCMAYCRLVIVPG) traverse the membrane as a helical segment. Residues 271–291 (PQTAFSSADNPIARTPSAWTR) are Extracellular-facing. Residues 292 to 312 (LLTFLYLPVFNLRLLLQPNVL) form a helical membrane-spanning segment. Residues 313-510 (SFDWGMDALP…HACVLIMSLS (198 aa)) are Cytoplasmic-facing. The disordered stretch occupies residues 450 to 480 (RSSSSCSNSTNSSSSSSSSSSSSSSSSSSLS). A helical transmembrane segment spans residues 511–531 (FLALPFLPASNLLFYVGFVVA). The Extracellular segment spans residues 532–533 (ER). Residues 534–554 (LLYLPSVGFCLLVGYGVSKLM) form a helical membrane-spanning segment. Over 555 to 562 (SCNQRTRN) the chain is Cytoplasmic. Residues 563–580 (ILLLSFSLLLAAMSLRTL) traverse the membrane as a helical segment. The Extracellular segment spans residues 581 to 938 (RRNADWRDEE…NLAKLGVTNV (358 aa)). TPR repeat units lie at residues 602-635 (PKAL…RPNM), 636-669 (ADVH…RPNL), 670-703 (AVAY…DGAA), 715-748 (SSAY…LPGL), 753-786 (EILY…QPNQ), 788-821 (AAHL…APEQ), 822-855 (ASVY…APND), 856-889 (YTLV…RPGD), and 890-923 (AHAH…QPGD). Asn-800 carries an N-linked (GlcNAc...) asparagine glycan.

It belongs to the TMTC family.

It is found in the membrane. The protein localises to the endoplasmic reticulum. The enzyme catalyses a di-trans,poly-cis-dolichyl beta-D-mannosyl phosphate + L-seryl-[protein] = 3-O-(alpha-D-mannosyl)-L-seryl-[protein] + a di-trans,poly-cis-dolichyl phosphate + H(+). It carries out the reaction a di-trans,poly-cis-dolichyl beta-D-mannosyl phosphate + L-threonyl-[protein] = 3-O-(alpha-D-mannosyl)-L-threonyl-[protein] + a di-trans,poly-cis-dolichyl phosphate + H(+). The protein operates within protein modification; protein glycosylation. In terms of biological role, transfers mannosyl residues to the hydroxyl group of serine or threonine residues. This chain is Protein O-mannosyl-transferase Tmtc2, found in Drosophila melanogaster (Fruit fly).